Consider the following 255-residue polypeptide: MTPLRIAFYASKRPEAQQVLPQLRDKYGHYSEEEADVIVALGGDGAMLDTLRRRFDDGKPVYGMHLGTVGFLMNDFHADGLPERIEAAERATLSPLRMQATDLDGTVHRAMAINEISLLRQTAQSARLKIIVDGRVRMEELVCDGLMVATPAGSTAYNLSAHGPILPIGAKLLALTPVSAFRPRRWRGALLKAEARVDIEVVAPDRRPVSASADNEEVRNIAKVTVETDPARTLKVLFDPGHALDERILREQFAF.

Asp44 (proton acceptor) is an active-site residue. NAD(+) is bound by residues 44-45 (DG), 114-115 (NE), Asp144, Ala152, and 155-160 (TAYNLS).

Belongs to the NAD kinase family. It depends on a divalent metal cation as a cofactor.

Its subcellular location is the cytoplasm. The enzyme catalyses NAD(+) + ATP = ADP + NADP(+) + H(+). Involved in the regulation of the intracellular balance of NAD and NADP, and is a key enzyme in the biosynthesis of NADP. Catalyzes specifically the phosphorylation on 2'-hydroxyl of the adenosine moiety of NAD to yield NADP. The polypeptide is NAD kinase (Hyphomonas neptunium (strain ATCC 15444)).